Reading from the N-terminus, the 396-residue chain is Elongation factor Tu (396 aa).

In terms of domain architecture, tr-type G spans 11–205; that stretch reads KPHVNIGTIG…TVDEYIPTPE (195 aa). The G1 stretch occupies residues 20–27; that stretch reads GHVDHGKT. 20–27 is a GTP binding site; sequence GHVDHGKT. Position 27 (threonine 27) interacts with Mg(2+). Residues 61 to 65 are G2; it reads GITIN. A G3 region spans residues 82 to 85; that stretch reads DAPG. Residues 82–86 and 137–140 each bind GTP; these read DAPGH and NKVD. Positions 137 to 140 are G4; it reads NKVD. The interval 175–177 is G5; that stretch reads SAL.

It belongs to the TRAFAC class translation factor GTPase superfamily. Classic translation factor GTPase family. EF-Tu/EF-1A subfamily. In terms of assembly, monomer.

The protein resides in the cytoplasm. It carries out the reaction GTP + H2O = GDP + phosphate + H(+). Its function is as follows. GTP hydrolase that promotes the GTP-dependent binding of aminoacyl-tRNA to the A-site of ribosomes during protein biosynthesis. The sequence is that of Elongation factor Tu from Lactobacillus gasseri (strain ATCC 33323 / DSM 20243 / BCRC 14619 / CIP 102991 / JCM 1131 / KCTC 3163 / NCIMB 11718 / NCTC 13722 / AM63).